The following is an 852-amino-acid chain: Protein SEY1 (852 aa).

Residues 1–738 (MNGHFAAVGN…KRSAIGGITQ (738 aa)) are Cytoplasmic-facing. The region spanning 47–283 (GFNYHLISVF…FVGGVFLPEY (237 aa)) is the GB1/RHD3-type G domain. 57–64 (GSQSTGKS) provides a ligand contact to GTP. Residues 475–500 (QYRLFEKELDEVSARLRKEEMRRLAI) adopt a coiled-coil conformation. A helical transmembrane segment spans residues 739–759 (VPLYFYIVLLIFGWNEIVMVL). At 760–762 (RNP) the chain is on the lumenal side. A helical transmembrane segment spans residues 763–783 (MLFMLLLVMGGGTYVAYTLNL). Residues 784-852 (LGPMMQMANA…AQEVEEDDDI (69 aa)) lie on the Cytoplasmic side of the membrane. The interval 825–852 (RSQDNGIGMDRLDSRGKKAQEVEEDDDI) is disordered. Positions 834 to 845 (DRLDSRGKKAQE) are enriched in basic and acidic residues.

It belongs to the TRAFAC class dynamin-like GTPase superfamily. GB1/RHD3 GTPase family. RHD3 subfamily.

The protein localises to the endoplasmic reticulum membrane. Cooperates with the reticulon proteins and tubule-shaping DP1 family proteins to generate and maintain the structure of the tubular endoplasmic reticulum network. Has GTPase activity, which is required for its function in ER organization. This Chaetomium globosum (strain ATCC 6205 / CBS 148.51 / DSM 1962 / NBRC 6347 / NRRL 1970) (Soil fungus) protein is Protein SEY1.